A 54-amino-acid polypeptide reads, in one-letter code: ComX pheromone (54 aa).

Residues 1 to 46 constitute a propeptide that is removed on maturation; sequence MQEIVGYLVKNPEVLDEVMKGRASLLNIDKDQLKSIVDAFGGLQIY. The 3'-geranyl-2',N2-cyclotryptophan moiety is linked to residue Trp51.

As to quaternary structure, interacts directly with the sensor histidine kinase ComP and stimulates its activity. Post-translationally, trp-51 is modified by isoprenylation, probably by geranylation, which is essential for activity. Modified by the tryptophan prenyltransferase ComQ before export to the extracellular environment. The type of isoprenyl derivative differs among the different pherotypes and depends on ComX primary sequence.

The protein localises to the secreted. Part of a major quorum-sensing system that regulates the development of genetic competence. Acts through the activation of the two-component regulatory system ComP/ComA composed of a sensor histidine kinase, ComP, and a response regulator, ComA. This is ComX pheromone from Bacillus mojavensis.